The primary structure comprises 86 residues: Elongation factor 1-beta (86 aa).

The protein belongs to the EF-1-beta/EF-1-delta family.

Promotes the exchange of GDP for GTP in EF-1-alpha/GDP, thus allowing the regeneration of EF-1-alpha/GTP that could then be used to form the ternary complex EF-1-alpha/GTP/AAtRNA. The protein is Elongation factor 1-beta of Methanocorpusculum labreanum (strain ATCC 43576 / DSM 4855 / Z).